A 187-amino-acid chain; its full sequence is Ribonuclease M5 (187 aa).

The Toprim domain maps to 5-88 (KEVIVVEGKD…AFLPRKAGVP (84 aa)). Glutamate 11, aspartate 57, and aspartate 59 together coordinate Mg(2+).

The protein belongs to the ribonuclease M5 family. It depends on Mg(2+) as a cofactor.

The protein localises to the cytoplasm. The catalysed reaction is Endonucleolytic cleavage of RNA, removing 21 and 42 nucleotides, respectively, from the 5'- and 3'-termini of a 5S-rRNA precursor.. Functionally, required for correct processing of both the 5' and 3' ends of 5S rRNA precursor. Cleaves both sides of a double-stranded region yielding mature 5S rRNA in one step. The polypeptide is Ribonuclease M5 (Lactiplantibacillus plantarum (strain ATCC BAA-793 / NCIMB 8826 / WCFS1) (Lactobacillus plantarum)).